We begin with the raw amino-acid sequence, 273 residues long: Dermonecrotic toxin LapSicTox-alphaIB1b2 (273 aa).

His5 is a catalytic residue. Residues Glu25 and Asp27 each contribute to the Mg(2+) site. Catalysis depends on His41, which acts as the Nucleophile. Cystine bridges form between Cys45-Cys51 and Cys47-Cys190. Asp85 contacts Mg(2+). Asn250 carries an N-linked (GlcNAc...) asparagine glycan.

This sequence belongs to the arthropod phospholipase D family. Class II subfamily. Mg(2+) serves as cofactor. In terms of tissue distribution, expressed by the venom gland.

Its subcellular location is the secreted. It catalyses the reaction an N-(acyl)-sphingosylphosphocholine = an N-(acyl)-sphingosyl-1,3-cyclic phosphate + choline. It carries out the reaction an N-(acyl)-sphingosylphosphoethanolamine = an N-(acyl)-sphingosyl-1,3-cyclic phosphate + ethanolamine. The catalysed reaction is a 1-acyl-sn-glycero-3-phosphocholine = a 1-acyl-sn-glycero-2,3-cyclic phosphate + choline. The enzyme catalyses a 1-acyl-sn-glycero-3-phosphoethanolamine = a 1-acyl-sn-glycero-2,3-cyclic phosphate + ethanolamine. Functionally, dermonecrotic toxins cleave the phosphodiester linkage between the phosphate and headgroup of certain phospholipids (sphingolipid and lysolipid substrates), forming an alcohol (often choline) and a cyclic phosphate. This toxin acts on sphingomyelin (SM). It may also act on ceramide phosphoethanolamine (CPE), lysophosphatidylcholine (LPC) and lysophosphatidylethanolamine (LPE), but not on lysophosphatidylserine (LPS), and lysophosphatidylglycerol (LPG). It acts by transphosphatidylation, releasing exclusively cyclic phosphate products as second products. Induces dermonecrosis, hemolysis, increased vascular permeability, edema, inflammatory response, and platelet aggregation. In Loxosceles apachea (Apache recluse spider), this protein is Dermonecrotic toxin LapSicTox-alphaIB1b2.